Reading from the N-terminus, the 502-residue chain is Neuronal acetylcholine receptor subunit alpha-7 (502 aa).

A signal peptide spans 1 to 22 (MRCSPGGVWLALAASLLHVSLQ). Residues 23-233 (GEFQRKLYKE…VTMRRRTLYY (211 aa)) are Extracellular-facing. Ca(2+) contacts are provided by arginine 42 and valine 44. Residues asparagine 46, asparagine 90, and asparagine 133 are each glycosylated (N-linked (GlcNAc...) asparagine). A disulfide bridge connects residues cysteine 150 and cysteine 164. The Ca(2+) site is built by serine 172 and tyrosine 210. Residues cysteine 212 and cysteine 213 are joined by a disulfide bond. The next 3 helical transmembrane spans lie at 234–254 (GLNL…VFLL), 259–279 (GEKI…MLLV), and 292–315 (LIAQ…VIVL). Residues 260–267 (EKISLGIT) are essential for TMEM35A/NACHO-mediated proper subunit assembly and trafficking to cell membrane. Residues 316–466 (QYHHHDPDGG…CSEWKFAACV (151 aa)) are Cytoplasmic-facing. A helical transmembrane segment spans residues 467–489 (VDRLCLMAFSVFTIICTIGILMS).

Belongs to the ligand-gated ion channel (TC 1.A.9) family. Acetylcholine receptor (TC 1.A.9.1) subfamily. Alpha-7/CHRNA7 sub-subfamily. As to quaternary structure, homopentamer. Can also form heteropentamers with CHRNB2, mainly found in basal forebrain cholinergic neurons. Interacts with RIC3; which is required for proper folding and assembly. Interacts with LYPD6. Interacts with CANX. In terms of processing, glycosylations at Asn-46, Asn-90 and Asn-133 are essential for TMEM35A/NACHO-mediated proper subunit assembly and trafficking to the cell membrane. As to expression, expressed in neuronal cells. Expressed in macrophages (at protein level).

It is found in the postsynaptic cell membrane. The protein localises to the cell membrane. The catalysed reaction is Ca(2+)(in) = Ca(2+)(out). It catalyses the reaction K(+)(in) = K(+)(out). It carries out the reaction Na(+)(in) = Na(+)(out). The enzyme catalyses choline(out) = choline(in). The catalysed reaction is NH4(+)(in) = NH4(+)(out). It catalyses the reaction L-arginine(in) = L-arginine(out). It carries out the reaction guanidine(out) = guanidine(in). With respect to regulation, activated by a myriad of ligands such as acetylcholine, cytisine, nicotine, choline and epibatidine. Oligomeric amyloid-beta protein 42 activates specifially CHRNA7:CHRNB2 nAchRs. Activity is modulated by positive allosteric modulators (PAMs), such as flavonoids, with a wide range of chemical diversity, pharmacological sensitivity and efficacy. AChR activity is inhibited by the antagonists alpha-conotoxons RgIA, ImI and ImII, small disulfide-constrained peptides from cone snails. Alpha-conotoxin PnIC selectively inhibits CHRNA7:CHRNB2 over CHRNA7 homopentamer. Its function is as follows. Component of neuronal acetylcholine receptors (nAChRs) that function as pentameric, ligand-gated cation channels with high calcium permeability among other activities. nAChRs are excitatory neurotrasnmitter receptors formed by a collection of nAChR subunits known to mediate synaptic transmission in the nervous system and the neuromuscular junction. Each nAchR subunit confers differential attributes to channel properties, including activation, deactivation and desensitization kinetics, pH sensitivity, cation permeability, and binding to allosteric modulators. CHRNA7 forms homopentameric neuronal acetylcholine receptors abundantly expressed in the central nervous system, characterized by fast desensitization and high calcium permeability. Also forms heteropentamers with CHRNB2, mainly expressed in basal forebrain cholinergic neurons. Involved in the modulation of calcium-dependent signaling pathways and influences the release of neurotransmitters, including dopamine, glutamate and GABA. Also expressed in non-neuronal cells such as immune cells like lymphocytes, monocytes and macrophages. In T cells, activation induces metabotropic signaling that results in an increase of intracellular Ca2+ concentrations, independent of ionotropic receptor functions. In macrophages, required for acetylcholine-mediated inhibition of TNF and other inflammatory cytokine release. Once activated by acetylcholine, nicotine or other agonists, selectively inhibits production of pro-inflammatory cytokines while leaving anti-inflammatory cytokines undisturbed. Stimulates the cholinergic anti-inflammatory pathway, controlling inflammation by inhibiting NFKB nuclear translocation and activating the JAK2-STAT3 pathway, independently of ion channel activity. Also expressed in the urothelium where it modulates reflex bladder activity by increasing intracellular calcium through internal stores and decreasing basal ATP release. In Homo sapiens (Human), this protein is Neuronal acetylcholine receptor subunit alpha-7.